The sequence spans 208 residues: Outer-membrane lipoprotein carrier protein (208 aa).

The signal sequence occupies residues 1-21 (MPAFRYLIVLPLLCWGFASQA).

This sequence belongs to the LolA family. In terms of assembly, monomer.

It localises to the periplasm. Participates in the translocation of lipoproteins from the inner membrane to the outer membrane. Only forms a complex with a lipoprotein if the residue after the N-terminal Cys is not an aspartate (The Asp acts as a targeting signal to indicate that the lipoprotein should stay in the inner membrane). In Methylococcus capsulatus (strain ATCC 33009 / NCIMB 11132 / Bath), this protein is Outer-membrane lipoprotein carrier protein.